Consider the following 113-residue polypeptide: UPF0251 protein Teth514_1147 (113 aa).

The protein belongs to the UPF0251 family.

The polypeptide is UPF0251 protein Teth514_1147 (Thermoanaerobacter sp. (strain X514)).